Reading from the N-terminus, the 503-residue chain is Maturase K (503 aa).

It belongs to the intron maturase 2 family. MatK subfamily.

The protein resides in the plastid. The protein localises to the chloroplast. In terms of biological role, usually encoded in the trnK tRNA gene intron. Probably assists in splicing its own and other chloroplast group II introns. This is Maturase K from Diospyros virginiana (American persimmon).